Reading from the N-terminus, the 172-residue chain is 6,7-dimethyl-8-ribityllumazine synthase (172 aa).

5-amino-6-(D-ribitylamino)uracil contacts are provided by residues Phe24, 58–60, and 82–84; these read ALE and AVI. 87–88 lines the (2S)-2-hydroxy-3-oxobutyl phosphate pocket; the sequence is ET. The active-site Proton donor is His90. Position 115 (Asn115) interacts with 5-amino-6-(D-ribitylamino)uracil. Arg129 provides a ligand contact to (2S)-2-hydroxy-3-oxobutyl phosphate. The segment at 150–172 is disordered; the sequence is ALDQLGDDDEDEEEDEDDEEERA. A compositionally biased stretch (acidic residues) spans 154-172; the sequence is LGDDDEDEEEDEDDEEERA.

The protein belongs to the DMRL synthase family.

The enzyme catalyses (2S)-2-hydroxy-3-oxobutyl phosphate + 5-amino-6-(D-ribitylamino)uracil = 6,7-dimethyl-8-(1-D-ribityl)lumazine + phosphate + 2 H2O + H(+). It participates in cofactor biosynthesis; riboflavin biosynthesis; riboflavin from 2-hydroxy-3-oxobutyl phosphate and 5-amino-6-(D-ribitylamino)uracil: step 1/2. In terms of biological role, catalyzes the formation of 6,7-dimethyl-8-ribityllumazine by condensation of 5-amino-6-(D-ribitylamino)uracil with 3,4-dihydroxy-2-butanone 4-phosphate. This is the penultimate step in the biosynthesis of riboflavin. The sequence is that of 6,7-dimethyl-8-ribityllumazine synthase from Burkholderia multivorans (strain ATCC 17616 / 249).